Reading from the N-terminus, the 1104-residue chain is Collagenase ColA (1104 aa).

The first 39 residues, M1–A39, serve as a signal peptide directing secretion. Positions A40–R86 are excised as a propeptide. The interval A87–M761 is S1 metalloprotease domain. Positions Y93–G367 are activator domain. Residues D377 to N646 are catalytic subdomain. Position 477 (E477) interacts with Ca(2+). H502 contributes to the Zn(2+) binding site. E503 is a catalytic residue. H506 is a Zn(2+) binding site. G510, V514, and G516 together coordinate Ca(2+). Zn(2+) is bound at residue E534. The tract at residues D654–T767 is helper subdomain. The S2 domain stretch occupies residues N762–P860. Positions 772, 773, 800, 802, 841, 866, 868, 870, 894, 897, 993, 995, 997, 1016, 1020, 1022, and 1023 each coordinate Ca(2+). Residues E774–E862 form the PKD domain. Positions N865–L979 are S3a collagen-binding domain. Residues K992–K1104 are S3b collagen-binding domain.

The protein belongs to the peptidase M9B family. Collagenase subfamily. Ca(2+) is required as a cofactor. Zn(2+) serves as cofactor.

Its subcellular location is the secreted. The enzyme catalyses Digestion of native collagen in the triple helical region at Xaa-|-Gly bonds. With synthetic peptides, a preference is shown for Gly at P3 and P1', Pro and Ala at P2 and P2', and hydroxyproline, Ala or Arg at P3'.. Functionally, clostridial collagenases are among the most efficient degraders of eukaryotic collagen known; saprophytes use collagen as a carbon source while pathogens additionally digest collagen to aid in host colonization. Has both tripeptidylcarboxypeptidase on Gly-X-Y and endopeptidase activities; the endopeptidase cuts within the triple helix region of collagen while tripeptidylcarboxypeptidase successively digests the exposed ends, thus clostridial collagenases can digest large sections of collagen. In Clostridium perfringens (strain 13 / Type A), this protein is Collagenase ColA (colA).